The chain runs to 378 residues: D-alanine--D-alanine ligase (378 aa).

An ATP-grasp domain is found at 140 to 346 (KKIISQAGIR…YSDLIDRLIQ (207 aa)). 170 to 225 (EEKLGNLTFVKPAKQGSSVGIHRVTNAEEYEKALDDAFKYDYKILVEQGIANPQEI) is a binding site for ATP. Mg(2+)-binding residues include aspartate 300, glutamate 313, and asparagine 315.

Belongs to the D-alanine--D-alanine ligase family. Mg(2+) serves as cofactor. The cofactor is Mn(2+).

Its subcellular location is the cytoplasm. The catalysed reaction is 2 D-alanine + ATP = D-alanyl-D-alanine + ADP + phosphate + H(+). The protein operates within cell wall biogenesis; peptidoglycan biosynthesis. Cell wall formation. In Limosilactobacillus reuteri (strain DSM 20016) (Lactobacillus reuteri), this protein is D-alanine--D-alanine ligase.